We begin with the raw amino-acid sequence, 293 residues long: MPELPEVETVRKGLEQKLKNFIIKRVEICRESTVAYPIDKQDFVKGLQNSLINKWDRRGKYLIAKLKKADRNHTYIENEMSLKNNGSLVVHLRMTGYFTFNKNPTSPCKHTRIRLFDNNNNELRYIDVRSFGQMWWVREGLSPKNIIKGLGALGPEPFSEKFNISYLTKIILNKTRSIKSILLDQTIVAGIGNIYADESLYSAGISPFREARTIEKHELIKLRIAIIEVLKKSIGAGGTTFSDFRDLEGENGNFGLQTNVYRRTGKKCHACKNLIERQKISGRSTHWCRKCQK.

The active-site Schiff-base intermediate with DNA is P2. Catalysis depends on E3, which acts as the Proton donor. K60 acts as the Proton donor; for beta-elimination activity in catalysis. Residues H110, R129, and K174 each contribute to the DNA site. Residues 259–293 (NVYRRTGKKCHACKNLIERQKISGRSTHWCRKCQK) form an FPG-type zinc finger. The active-site Proton donor; for delta-elimination activity is the R283.

The protein belongs to the FPG family. As to quaternary structure, monomer. The cofactor is Zn(2+).

It catalyses the reaction Hydrolysis of DNA containing ring-opened 7-methylguanine residues, releasing 2,6-diamino-4-hydroxy-5-(N-methyl)formamidopyrimidine.. The enzyme catalyses 2'-deoxyribonucleotide-(2'-deoxyribose 5'-phosphate)-2'-deoxyribonucleotide-DNA = a 3'-end 2'-deoxyribonucleotide-(2,3-dehydro-2,3-deoxyribose 5'-phosphate)-DNA + a 5'-end 5'-phospho-2'-deoxyribonucleoside-DNA + H(+). Its function is as follows. Involved in base excision repair of DNA damaged by oxidation or by mutagenic agents. Acts as a DNA glycosylase that recognizes and removes damaged bases. Has a preference for oxidized purines, such as 7,8-dihydro-8-oxoguanine (8-oxoG). Has AP (apurinic/apyrimidinic) lyase activity and introduces nicks in the DNA strand. Cleaves the DNA backbone by beta-delta elimination to generate a single-strand break at the site of the removed base with both 3'- and 5'-phosphates. The sequence is that of Formamidopyrimidine-DNA glycosylase from Prochlorococcus marinus (strain MIT 9515).